Reading from the N-terminus, the 131-residue chain is Leptin receptor gene-related protein (131 aa).

The next 4 membrane-spanning stretches (helical) occupy residues 7–27 (LVALSFSGAIGLTFLMLGCAL), 32–52 (VYWPLFVLIFHAISPIPHFIA), 69–89 (LAYFFTTGIVVSAFGFPVILA), and 100–120 (GLVLAGNAVIFLTIQGFFLIF).

The protein belongs to the OB-RGRP/VPS55 family. As to quaternary structure, interacts with LEPR. Interacts with RAB13. In terms of tissue distribution, expressed at the highest levels in heart and placenta and at a lesser extent in lung, liver, skeletal muscle, kidney and pancreas.

It localises to the golgi apparatus membrane. It is found in the endosome membrane. In terms of biological role, negatively regulates leptin receptor (LEPR) cell surface expression, and thus decreases response to leptin. Negatively regulates growth hormone (GH) receptor cell surface expression in liver. May play a role in liver resistance to GH during periods of reduced nutrient availability. The sequence is that of Leptin receptor gene-related protein (LEPROT) from Homo sapiens (Human).